Consider the following 283-residue polypeptide: NAD kinase (283 aa).

Catalysis depends on D68, which acts as the Proton acceptor. Residues 68–69 (DG), R73, 142–143 (ND), R153, R170, D172, and 183–188 (TAYSLS) contribute to the NAD(+) site.

The protein belongs to the NAD kinase family. A divalent metal cation is required as a cofactor.

It is found in the cytoplasm. It catalyses the reaction NAD(+) + ATP = ADP + NADP(+) + H(+). Involved in the regulation of the intracellular balance of NAD and NADP, and is a key enzyme in the biosynthesis of NADP. Catalyzes specifically the phosphorylation on 2'-hydroxyl of the adenosine moiety of NAD to yield NADP. This chain is NAD kinase, found in Symbiobacterium thermophilum (strain DSM 24528 / JCM 14929 / IAM 14863 / T).